Reading from the N-terminus, the 416-residue chain is Glutamyl-tRNA reductase 1 (416 aa).

Substrate contacts are provided by residues 57–60 (TCNR), S113, 118–120 (DFE), and Q124. Residue C58 is the Nucleophile of the active site. 193-198 (GTGKIG) contributes to the NADP(+) binding site.

It belongs to the glutamyl-tRNA reductase family. In terms of assembly, homodimer.

It carries out the reaction (S)-4-amino-5-oxopentanoate + tRNA(Glu) + NADP(+) = L-glutamyl-tRNA(Glu) + NADPH + H(+). It functions in the pathway porphyrin-containing compound metabolism; protoporphyrin-IX biosynthesis; 5-aminolevulinate from L-glutamyl-tRNA(Glu): step 1/2. In terms of biological role, catalyzes the NADPH-dependent reduction of glutamyl-tRNA(Glu) to glutamate 1-semialdehyde (GSA). In Flavobacterium johnsoniae (strain ATCC 17061 / DSM 2064 / JCM 8514 / BCRC 14874 / CCUG 350202 / NBRC 14942 / NCIMB 11054 / UW101) (Cytophaga johnsonae), this protein is Glutamyl-tRNA reductase 1.